We begin with the raw amino-acid sequence, 386 residues long: Putative 8-amino-7-oxononanoate synthase (386 aa).

Residue Arg22 coordinates substrate. 109–110 provides a ligand contact to pyridoxal 5'-phosphate; sequence GY. Position 134 (His134) interacts with substrate. Residues Ser182, 207–210, and 238–241 each bind pyridoxal 5'-phosphate; these read DEAH and TLSK. Lys241 carries the post-translational modification N6-(pyridoxal phosphate)lysine. Thr356 is a binding site for substrate.

This sequence belongs to the class-II pyridoxal-phosphate-dependent aminotransferase family. BioF subfamily. As to quaternary structure, homodimer. Pyridoxal 5'-phosphate serves as cofactor.

It catalyses the reaction 6-carboxyhexanoyl-[ACP] + L-alanine + H(+) = (8S)-8-amino-7-oxononanoate + holo-[ACP] + CO2. It functions in the pathway cofactor biosynthesis; biotin biosynthesis. Catalyzes the decarboxylative condensation of pimeloyl-[acyl-carrier protein] and L-alanine to produce 8-amino-7-oxononanoate (AON), [acyl-carrier protein], and carbon dioxide. This Nostoc sp. (strain PCC 7120 / SAG 25.82 / UTEX 2576) protein is Putative 8-amino-7-oxononanoate synthase (bioF).